A 209-amino-acid chain; its full sequence is ATP synthase subunit O, mitochondrial (209 aa).

The protein belongs to the ATPase delta chain family. F-type ATPases have 2 components, CF(1) - the catalytic core - and CF(0) - the membrane proton channel. CF(1) has five subunits: alpha(3), beta(3), gamma(1), delta(1), epsilon(1). CF(0) has three main subunits: a, b and c.

The protein localises to the mitochondrion. The protein resides in the mitochondrion inner membrane. Mitochondrial membrane ATP synthase (F(1)F(0) ATP synthase or Complex V) produces ATP from ADP in the presence of a proton gradient across the membrane which is generated by electron transport complexes of the respiratory chain. F-type ATPases consist of two structural domains, F(1) - containing the extramembraneous catalytic core and F(0) - containing the membrane proton channel, linked together by a central stalk and a peripheral stalk. During catalysis, ATP synthesis in the catalytic domain of F(1) is coupled via a rotary mechanism of the central stalk subunits to proton translocation. Part of the complex F(0) domain and the peripheric stalk, which acts as a stator to hold the catalytic alpha(3)beta(3) subcomplex and subunit a/ATP6 static relative to the rotary elements. In Drosophila melanogaster (Fruit fly), this protein is ATP synthase subunit O, mitochondrial.